The sequence spans 546 residues: MGSRNSSSAGSGSGDPSEGLTRRGAGLRRSEEEEEEDEDVDLAQVLAYLLRRGQVRLVQGGGAANLQFIQALLDSEEENDRAWDGRLGDRYNPPVDATPDTRELECNEIKTQVELATGQLGLRRAAQKHSFPRMLHQRERGLCHRGSFSLGEQSRVISHFLPNDLGFTDSYSQKAFCGIYSKDGQIFMSACQDQTIRLYDCRYGRFRKFKSIKARDVGWSVLDVAFTPDGSHFLYSSWSDYIHICNIYGEGDTHTALDLRPDERRFAVFSIAVSSDGREVLGGANDGCLYVFDREQNRRTLQIESHEDDVNAVAFADISSQILFSGGDDAICKVWDRRTMREDDPKPVGALAGHQDGITFIDSKGDARYLISNSKDQTIKLWDIRRFSSREGMEASRQAATQQNWDYRWQQVPKKAWRKLKLPGDSSLMTYRGHGVLHTLIRCRFSPIHSTGQQFIYSGCSTGKVVVYDLLSGHIVKKLTNHKACVRDVSWHPFEEKIVSSSWDGNLRLWQYRQAEYFQDDMPESEECASAPAPVPRSSTPFSSPQ.

A compositionally biased stretch (low complexity) spans 1–19 (MGSRNSSSAGSGSGDPSEG). The tract at residues 1–40 (MGSRNSSSAGSGSGDPSEGLTRRGAGLRRSEEEEEEDEDV) is disordered. The residue at position 75 (Ser75) is a Phosphoserine. WD repeat units follow at residues 170-210 (SYSQ…RKFK), 216-258 (DVGW…TALD), 263-302 (ERRFAVFSIAVSSDGREVLGGANDGCLYVFDREQNRRTLQ), 305-345 (SHED…EDDP), 353-392 (GHQDGITFIDSKGDARYLISNSKDQTIKLWDIRRFSSREG), 435-480 (GVLH…KKLT), and 481-520 (NHKACVRDVSWHPFEEKIVSSSWDGNLRLWQYRQAEYFQD). Residues 523–546 (PESEECASAPAPVPRSSTPFSSPQ) form a disordered region. Polar residues predominate over residues 537 to 546 (RSSTPFSSPQ).

In terms of assembly, interacts with DDB1 and CUL4A.

Its pathway is protein modification; protein ubiquitination. May function as a substrate receptor for CUL4-DDB1 E3 ubiquitin-protein ligase complex. This is DDB1- and CUL4-associated factor 11 (DCAF11) from Pongo abelii (Sumatran orangutan).